The following is a 76-amino-acid chain: Protein CYSTEINE-RICH TRANSMEMBRANE MODULE 11 (76 aa).

The segment at 19-45 (GPPPPVGVPPQYYPPPPPPPPPPPPPR) is disordered. A helical transmembrane segment spans residues 47–63 (VGFLEGLLAALCCCCLV).

Belongs to the CYSTM1 family. Heterodimers. Interacts with CYSTM6, CYSTM7 and WIH1/CYSTM13. In terms of tissue distribution, mostly expressed in stems, siliques, leaves and flowers and, to a lower extent, in roots.

The protein resides in the cell membrane. It localises to the cytoplasm. Its function is as follows. Involved in resistance to abiotic stress. The polypeptide is Protein CYSTEINE-RICH TRANSMEMBRANE MODULE 11 (Arabidopsis thaliana (Mouse-ear cress)).